A 192-amino-acid polypeptide reads, in one-letter code: Large ribosomal subunit protein bL25 (192 aa).

This sequence belongs to the bacterial ribosomal protein bL25 family. CTC subfamily. As to quaternary structure, part of the 50S ribosomal subunit; part of the 5S rRNA/L5/L18/L25 subcomplex. Contacts the 5S rRNA. Binds to the 5S rRNA independently of L5 and L18.

This is one of the proteins that binds to the 5S RNA in the ribosome where it forms part of the central protuberance. The protein is Large ribosomal subunit protein bL25 of Porphyromonas gingivalis (strain ATCC 33277 / DSM 20709 / CIP 103683 / JCM 12257 / NCTC 11834 / 2561).